Consider the following 562-residue polypeptide: BOS complex subunit NCLN (562 aa).

Residues 1 to 41 (MLEEAGEVLESVLKASCLPLSFLLFVPAVLLLLGPPPAAEA) form the signal peptide. The Extracellular segment spans residues 42-521 (AHESTVYRMQ…VMNAYRVKPA (480 aa)). N-linked (GlcNAc...) asparagine glycosylation is present at asparagine 240. The interval 420 to 447 (GFDEGHLQPNREGSTCRSADLHGSDADP) is disordered. A helical transmembrane segment spans residues 522 to 542 (IFDLLLAVCIAAYLGVAYVAV). The Cytoplasmic portion of the chain corresponds to 543–562 (QNFGLLYRMIQRLSLKTKQQ).

The protein belongs to the nicastrin family. In terms of assembly, component of the multi-pass translocon (MPT) complex.

The protein localises to the endoplasmic reticulum membrane. Functionally, component of the multi-pass translocon (MPT) complex that mediates insertion of multi-pass membrane proteins into the lipid bilayer of membranes. The MPT complex takes over after the SEC61 complex: following membrane insertion of the first few transmembrane segments of proteins by the SEC61 complex, the MPT complex occludes the lateral gate of the SEC61 complex to promote insertion of subsequent transmembrane regions. May antagonize Nodal signaling and subsequent organization of axial structures during mesodermal patterning, via its interaction with NOMO. The protein is BOS complex subunit NCLN (NCLN) of Gallus gallus (Chicken).